We begin with the raw amino-acid sequence, 447 residues long: Na(+)-translocating NADH-quinone reductase subunit A (447 aa).

This sequence belongs to the NqrA family. In terms of assembly, composed of six subunits; NqrA, NqrB, NqrC, NqrD, NqrE and NqrF.

The catalysed reaction is a ubiquinone + n Na(+)(in) + NADH + H(+) = a ubiquinol + n Na(+)(out) + NAD(+). NQR complex catalyzes the reduction of ubiquinone-1 to ubiquinol by two successive reactions, coupled with the transport of Na(+) ions from the cytoplasm to the periplasm. NqrA to NqrE are probably involved in the second step, the conversion of ubisemiquinone to ubiquinol. This chain is Na(+)-translocating NADH-quinone reductase subunit A, found in Haemophilus influenzae (strain ATCC 51907 / DSM 11121 / KW20 / Rd).